The sequence spans 382 residues: Intermediate transcription factor 3 large subunit (382 aa).

Belongs to the orthopoxvirus OPG150 family. Heterodimerizes with protein A8 to form the virus intermediate transcription factor (VITF)-3.

In terms of biological role, acts with RNA polymerase to initiate transcription from intermediate gene promoters. This Bos taurus (Bovine) protein is Intermediate transcription factor 3 large subunit (OPG150).